Reading from the N-terminus, the 208-residue chain is MIAIKDAHFLTSSSQLFQCPASLTSEMVILGRSNVGKSSFINTLLGKNLAKSSATPGKTRLANFFSTTWEDKENALRATFNVIDLPGFGYAKVSKSLKKEWEGFLWELLSVRTSIKLFIHLVDARHLDLEIDKNAKENIQALLRPDQAYLSLFTKFDKLNKNEQHRLFLNAPKPFLINTTHFNALSSKYPTLEIVRQTLLKYLLTNPS.

The EngB-type G domain maps to 23-205 (LTSEMVILGR…RQTLLKYLLT (183 aa)). Residues 31–38 (GRSNVGKS), 57–61 (GKTRL), 84–87 (DLPG), 154–157 (TKFD), and 182–184 (FNA) contribute to the GTP site. Serine 38 and threonine 59 together coordinate Mg(2+).

It belongs to the TRAFAC class TrmE-Era-EngA-EngB-Septin-like GTPase superfamily. EngB GTPase family. Mg(2+) is required as a cofactor.

Necessary for normal cell division and for the maintenance of normal septation. The chain is Probable GTP-binding protein EngB from Helicobacter pylori (strain P12).